A 118-amino-acid polypeptide reads, in one-letter code: uncharacterized protein (118 aa).

Residues 41 to 61 (IFLLIIITIIFALTMYTSVQV) form a helical membrane-spanning segment.

It localises to the host membrane. This is an uncharacterized protein from Ostreid herpesvirus 1 (isolate France) (OsHV-1).